The following is a 224-amino-acid chain: UPF0758 protein PM1152 (224 aa).

Positions 102 to 224 constitute an MPN domain; it reads AFKNSENVRF…YYSFAENRLL (123 aa). 3 residues coordinate Zn(2+): H173, H175, and D186. The JAMM motif motif lies at 173–186; sequence HNHPSGNPEPSASD.

It belongs to the UPF0758 family.

This Pasteurella multocida (strain Pm70) protein is UPF0758 protein PM1152.